A 209-amino-acid chain; its full sequence is Uridine kinase (209 aa).

Residue 12-19 participates in ATP binding; that stretch reads GGTGSGKS.

It belongs to the uridine kinase family.

Its subcellular location is the cytoplasm. The enzyme catalyses uridine + ATP = UMP + ADP + H(+). It catalyses the reaction cytidine + ATP = CMP + ADP + H(+). It participates in pyrimidine metabolism; CTP biosynthesis via salvage pathway; CTP from cytidine: step 1/3. The protein operates within pyrimidine metabolism; UMP biosynthesis via salvage pathway; UMP from uridine: step 1/1. This Clostridium tetani (strain Massachusetts / E88) protein is Uridine kinase.